Consider the following 516-residue polypeptide: RxLR effector protein PITG_15127 (516 aa).

A signal peptide spans 1 to 22 (MRLYSGAILCTIATLLISVSTA). The short motif at 48–63 (RFLRVSTQNTENGENR) is the RxLR-dEER element.

Belongs to the RxLR effector family.

It localises to the secreted. It is found in the host cell membrane. The protein resides in the host nucleus. The protein localises to the host cytoplasm. Functionally, effector that enhances P.infestans colonization of Nicotiana benthamiana leaves. The protein is RxLR effector protein PITG_15127 of Phytophthora infestans (strain T30-4) (Potato late blight agent).